The chain runs to 123 residues: Large ribosomal subunit protein uL18 (123 aa).

The protein belongs to the universal ribosomal protein uL18 family. In terms of assembly, part of the 50S ribosomal subunit; part of the 5S rRNA/L5/L18/L25 subcomplex. Contacts the 5S and 23S rRNAs.

Its function is as follows. This is one of the proteins that bind and probably mediate the attachment of the 5S RNA into the large ribosomal subunit, where it forms part of the central protuberance. The chain is Large ribosomal subunit protein uL18 from Chlamydia muridarum (strain MoPn / Nigg).